Here is a 322-residue protein sequence, read N- to C-terminus: MEWQTRFSPLNLSTQDALPELSISRLDHLGMITMVGDDKKSYLHGQVTCDVVSLEKDQSTLGAHCDAKGKVWSVFRLFHHGDGYGMIQPKSAIEIELKEIKKYAVFSKVTIEESNDVILGVAGVNADAFVSALNEDAGDVRIINGGTAVKVEANRWLLVVTEEAAQALIENSDATLTTRELWTRFDIESALPFVSATAQNEHIPQALNIQALGGISFTKGCYTGQETVARAKYRGTNKRAMYIVKGVTSTALNDDAIELERSVGDNWRSVGTLLTHYQFSDNQAMGLIVLPNNLDDDTRLRLTSQPDCEWTIAELPYSLDDE.

Tryptophan 182 lines the folate pocket.

It belongs to the tRNA-modifying YgfZ family.

It localises to the cytoplasm. In terms of biological role, folate-binding protein involved in regulating the level of ATP-DnaA and in the modification of some tRNAs. It is probably a key factor in regulatory networks that act via tRNA modification, such as initiation of chromosomal replication. This is tRNA-modifying protein YgfZ from Vibrio parahaemolyticus serotype O3:K6 (strain RIMD 2210633).